The sequence spans 468 residues: Uronate isomerase (468 aa).

This sequence belongs to the metallo-dependent hydrolases superfamily. Uronate isomerase family.

It catalyses the reaction D-glucuronate = D-fructuronate. The catalysed reaction is aldehydo-D-galacturonate = keto-D-tagaturonate. It participates in carbohydrate metabolism; pentose and glucuronate interconversion. This Bacteroides thetaiotaomicron (strain ATCC 29148 / DSM 2079 / JCM 5827 / CCUG 10774 / NCTC 10582 / VPI-5482 / E50) protein is Uronate isomerase.